The primary structure comprises 209 residues: Small ribosomal subunit protein uS4 (209 aa).

An S4 RNA-binding domain is found at 98–164 (SRLDNVVYRG…TPFIVARETA (67 aa)).

It belongs to the universal ribosomal protein uS4 family. In terms of assembly, part of the 30S ribosomal subunit. Contacts protein S5. The interaction surface between S4 and S5 is involved in control of translational fidelity.

Its function is as follows. One of the primary rRNA binding proteins, it binds directly to 16S rRNA where it nucleates assembly of the body of the 30S subunit. With S5 and S12 plays an important role in translational accuracy. The protein is Small ribosomal subunit protein uS4 of Frankia casuarinae (strain DSM 45818 / CECT 9043 / HFP020203 / CcI3).